The sequence spans 228 residues: LexA repressor (228 aa).

The H-T-H motif DNA-binding region spans phenylalanine 26–threonine 46. Catalysis depends on for autocatalytic cleavage activity residues serine 149 and lysine 187.

It belongs to the peptidase S24 family. In terms of assembly, homodimer.

It carries out the reaction Hydrolysis of Ala-|-Gly bond in repressor LexA.. Represses a number of genes involved in the response to DNA damage (SOS response), including recA and lexA. Has been shown to bind to the direct repeat sequence 5'-GTT-N(7)-GTTC-3'. In the presence of single-stranded DNA, RecA interacts with LexA causing an autocatalytic cleavage which disrupts the DNA-binding part of LexA, leading to derepression of the SOS regulon and eventually DNA repair. This Cereibacter sphaeroides (strain ATCC 17023 / DSM 158 / JCM 6121 / CCUG 31486 / LMG 2827 / NBRC 12203 / NCIMB 8253 / ATH 2.4.1.) (Rhodobacter sphaeroides) protein is LexA repressor.